The primary structure comprises 401 residues: Restriction of telomere capping protein 4 (401 aa).

At S23 the chain carries Phosphoserine. Over residues 35 to 48 the composition is skewed to basic and acidic residues; that stretch reads KHDIHDRESDDLSG. Positions 35–59 are disordered; sequence KHDIHDRESDDLSGHDAFSPSKKRG.

Belongs to the RTC4 family.

The protein localises to the cytoplasm. It is found in the nucleus. Functionally, may be involved in a process influencing telomere capping. This Saccharomyces cerevisiae (strain ATCC 204508 / S288c) (Baker's yeast) protein is Restriction of telomere capping protein 4 (RTC4).